A 129-amino-acid polypeptide reads, in one-letter code: Glycine cleavage system H protein (129 aa).

One can recognise a Lipoyl-binding domain in the interval 24–106 (LVRVGLSAYA…HGEGWLLVIR (83 aa)). K65 carries the post-translational modification N6-lipoyllysine.

The protein belongs to the GcvH family. The glycine cleavage system is composed of four proteins: P, T, L and H. (R)-lipoate serves as cofactor.

Functionally, the glycine cleavage system catalyzes the degradation of glycine. The H protein shuttles the methylamine group of glycine from the P protein to the T protein. The polypeptide is Glycine cleavage system H protein (Synechococcus sp. (strain CC9311)).